The primary structure comprises 498 residues: Lysine--tRNA ligase (498 aa).

Positions 407 and 414 each coordinate Mg(2+).

This sequence belongs to the class-II aminoacyl-tRNA synthetase family. As to quaternary structure, homodimer. It depends on Mg(2+) as a cofactor.

The protein localises to the cytoplasm. The catalysed reaction is tRNA(Lys) + L-lysine + ATP = L-lysyl-tRNA(Lys) + AMP + diphosphate. This is Lysine--tRNA ligase from Rhizobium etli (strain CIAT 652).